Here is a 110-residue protein sequence, read N- to C-terminus: uncharacterized protein (110 aa).

The first 26 residues, 1–26 (MIRNVLLAFMICSGMTLLGGCSSVMS), serve as a signal peptide directing secretion. The disordered stretch occupies residues 87–110 (RVEKSEANAQATNAVIPPARMPDN).

This sequence to E.coli YceK.

This is an uncharacterized protein from Escherichia coli (strain K12).